The primary structure comprises 688 residues: Glycine--tRNA ligase beta subunit (688 aa).

The protein belongs to the class-II aminoacyl-tRNA synthetase family. As to quaternary structure, tetramer of two alpha and two beta subunits.

Its subcellular location is the cytoplasm. It catalyses the reaction tRNA(Gly) + glycine + ATP = glycyl-tRNA(Gly) + AMP + diphosphate. This is Glycine--tRNA ligase beta subunit from Actinobacillus pleuropneumoniae serotype 7 (strain AP76).